Here is a 301-residue protein sequence, read N- to C-terminus: Probable alpha-L-glutamate ligase (301 aa).

An ATP-grasp domain is found at L104–E287. Residues K141, E178–Y179, D187, and R211–N213 contribute to the ATP site. 3 residues coordinate Mg(2+): D248, E260, and N262. Positions 248, 260, and 262 each coordinate Mn(2+).

Belongs to the RimK family. It depends on Mg(2+) as a cofactor. Mn(2+) is required as a cofactor.

This is Probable alpha-L-glutamate ligase from Azotobacter vinelandii (strain DJ / ATCC BAA-1303).